The primary structure comprises 362 residues: 3-dehydroquinate synthase (362 aa).

NAD(+) contacts are provided by residues 72–77, 106–110, 130–131, K143, K152, and 170–173; these read DGEQYK, GVVGD, TT, and CLKT. Zn(2+) is bound by residues E185, H248, and H265.

The protein belongs to the sugar phosphate cyclases superfamily. Dehydroquinate synthase family. It depends on Co(2+) as a cofactor. The cofactor is Zn(2+). NAD(+) serves as cofactor.

It is found in the cytoplasm. It carries out the reaction 7-phospho-2-dehydro-3-deoxy-D-arabino-heptonate = 3-dehydroquinate + phosphate. The protein operates within metabolic intermediate biosynthesis; chorismate biosynthesis; chorismate from D-erythrose 4-phosphate and phosphoenolpyruvate: step 2/7. Catalyzes the conversion of 3-deoxy-D-arabino-heptulosonate 7-phosphate (DAHP) to dehydroquinate (DHQ). This chain is 3-dehydroquinate synthase, found in Aliivibrio salmonicida (strain LFI1238) (Vibrio salmonicida (strain LFI1238)).